The chain runs to 132 residues: Transcription antitermination protein NusB (132 aa).

It belongs to the NusB family.

Functionally, involved in transcription antitermination. Required for transcription of ribosomal RNA (rRNA) genes. Binds specifically to the boxA antiterminator sequence of the ribosomal RNA (rrn) operons. This Campylobacter lari (strain RM2100 / D67 / ATCC BAA-1060) protein is Transcription antitermination protein NusB.